The chain runs to 394 residues: Elongation factor Tu 2 (394 aa).

Residues 10 to 204 (KPHVNVGTIG…YLDSYIPEPE (195 aa)) enclose the tr-type G domain. The interval 19–26 (GHVDHGKT) is G1. 19–26 (GHVDHGKT) contributes to the GTP binding site. T26 serves as a coordination point for Mg(2+). Residues 60 to 64 (GITIN) are G2. A G3 region spans residues 81-84 (DCPG). GTP contacts are provided by residues 81–85 (DCPGH) and 136–139 (NKCD). Residues 136 to 139 (NKCD) are G4. The segment at 174-176 (SAL) is G5.

Belongs to the TRAFAC class translation factor GTPase superfamily. Classic translation factor GTPase family. EF-Tu/EF-1A subfamily. Monomer.

It localises to the cytoplasm. It catalyses the reaction GTP + H2O = GDP + phosphate + H(+). Functionally, GTP hydrolase that promotes the GTP-dependent binding of aminoacyl-tRNA to the A-site of ribosomes during protein biosynthesis. The sequence is that of Elongation factor Tu 2 from Serratia proteamaculans (strain 568).